The primary structure comprises 207 residues: Serotonin N-acetyltransferase (207 aa).

A disordered region spans residues M1–R29. Residues R28–N35 are YWHAZ-binding. T31 carries the phosphothreonine; by PKA modification. The N-acetyltransferase domain maps to N35–R196. L124 contacts substrate. Residues L124–V126 and Q132–S137 each bind acetyl-CoA. A substrate-binding site is contributed by M159. Y168–R170 lines the acetyl-CoA pocket. S205 is modified (phosphoserine; by PKA).

Belongs to the acetyltransferase family. AANAT subfamily. Monomer. Interacts with several 14-3-3 proteins, including YWHAB, YWHAE, YWHAG and YWHAZ, preferentially when phosphorylated at Thr-31. Phosphorylation on Ser-205 also allows binding to YWHAZ, but with a 10-fold lower affinity. The interaction with YWHAZ considerably increases affinity for arylalkylamines and acetyl-CoA and protects the enzyme from dephosphorylation and proteasomal degradation. It may also prevent thiol-dependent inactivation. The physiological stoichiometry of the interaction is not clear. In vitro studies show either 1:2 (i.e. 1 AANAT molecule per YWHAZ dimer) or 2:2. CAMP-dependent phosphorylation on both N-terminal Thr-31 and C-terminal Ser-205 regulates AANAT activity by promoting interaction with 14-3-3 proteins. Highest expression in the pineal gland, followed by retina. Expressed at much lower levels in brainstem and pituitary gland. AANAT activity also detected at low levels in the olfactory lobe.

It localises to the cytoplasm. The enzyme catalyses a 2-arylethylamine + acetyl-CoA = an N-acetyl-2-arylethylamine + CoA + H(+). It functions in the pathway aromatic compound metabolism; melatonin biosynthesis; melatonin from serotonin: step 1/2. Functionally, controls the night/day rhythm of melatonin production in the pineal gland. Catalyzes the N-acetylation of serotonin into N-acetylserotonin, the penultimate step in the synthesis of melatonin. The protein is Serotonin N-acetyltransferase (AANAT) of Ovis aries (Sheep).